Here is a 208-residue protein sequence, read N- to C-terminus: FMN-dependent NADH:quinone oxidoreductase (208 aa).

Residues histidine 10, 17–19 (SRS), 104–107 (MWNL), 148–153 (SNGGFY), and aspartate 184 each bind FMN.

This sequence belongs to the azoreductase type 1 family. As to quaternary structure, homodimer. Requires FMN as cofactor.

The enzyme catalyses 2 a quinone + NADH + H(+) = 2 a 1,4-benzosemiquinone + NAD(+). It carries out the reaction N,N-dimethyl-1,4-phenylenediamine + anthranilate + 2 NAD(+) = 2-(4-dimethylaminophenyl)diazenylbenzoate + 2 NADH + 2 H(+). Quinone reductase that provides resistance to thiol-specific stress caused by electrophilic quinones. Its function is as follows. Also exhibits azoreductase activity. Catalyzes the reductive cleavage of the azo bond in aromatic azo compounds to the corresponding amines. Requires NADH, but not NADPH, as an electron donor for its activity. The enzyme can also reduce a wide range of sulfonated azo dyes. The substrate preference order is methyl Red &gt; Orange II &gt; Ponceau BS &gt; Ponceau S &gt; Orange G &gt; Amaranth. The polypeptide is FMN-dependent NADH:quinone oxidoreductase (Enterococcus faecalis (strain ATCC 700802 / V583)).